We begin with the raw amino-acid sequence, 67 residues long: Large ribosomal subunit protein uL29 (67 aa).

The protein belongs to the universal ribosomal protein uL29 family.

This is Large ribosomal subunit protein uL29 from Sphingopyxis alaskensis (strain DSM 13593 / LMG 18877 / RB2256) (Sphingomonas alaskensis).